The following is a 142-amino-acid chain: Large ribosomal subunit protein uL11 (142 aa).

It belongs to the universal ribosomal protein uL11 family. As to quaternary structure, part of the ribosomal stalk of the 50S ribosomal subunit. Interacts with L10 and the large rRNA to form the base of the stalk. L10 forms an elongated spine to which L12 dimers bind in a sequential fashion forming a multimeric L10(L12)X complex. In terms of processing, one or more lysine residues are methylated.

In terms of biological role, forms part of the ribosomal stalk which helps the ribosome interact with GTP-bound translation factors. This Proteus mirabilis (strain HI4320) protein is Large ribosomal subunit protein uL11.